The sequence spans 392 residues: Stilbene synthase 1 (392 aa).

Residue 55 to 58 (KFNR) coordinates substrate. The active site involves C164. Substrate contacts are provided by residues L267 and 305–307 (GGP).

This sequence belongs to the thiolase-like superfamily. Chalcone/stilbene synthases family. Homodimer. In leaves, expressed in palisade and spongy parenchyma cells and, to a lesser extent, in epidermal cells after induction.

It is found in the cytoplasm. The catalysed reaction is 4-coumaroyl-CoA + 3 malonyl-CoA + 3 H(+) = trans-resveratrol + 4 CO2 + 4 CoA. It participates in phytoalexin biosynthesis; 3,4',5-trihydroxystilbene biosynthesis; 3,4',5-trihydroxystilbene from trans-4-coumarate: step 2/2. Mediates resistance to pathogens which are sensitive to stilbenes such as Botrytis cinerea, Eutypa lata and Plasmopora viticola by enhancing the production of phytoalexins. Confers resistance to Phytophthora palmivora when expressed in papaya. The polypeptide is Stilbene synthase 1 (VINST1) (Vitis vinifera (Grape)).